A 79-amino-acid polypeptide reads, in one-letter code: Small ribosomal subunit protein uS17 (79 aa).

This sequence belongs to the universal ribosomal protein uS17 family. As to quaternary structure, part of the 30S ribosomal subunit.

In terms of biological role, one of the primary rRNA binding proteins, it binds specifically to the 5'-end of 16S ribosomal RNA. This chain is Small ribosomal subunit protein uS17, found in Rhizobium etli (strain CIAT 652).